The primary structure comprises 821 residues: TORTIFOLIA1-like protein 1 (821 aa).

HEAT repeat units lie at residues 69-110, 114-151, 163-201, 205-242, and 245-282; these read PDSP…SYTD, SQLA…QFLK, SSLV…SATE, AAFQ…VGAI, and QSLE…HSSS. Serine 406 is modified (phosphoserine). Disordered stretches follow at residues 416–437 and 553–610; these read PSRQ…NTSV and MSIQ…RAWD. A coiled-coil region spans residues 501-554; sequence PPLQRQLLHLERQQTHIMNMLQDFMGGSHDGMISLENRVRGLERIVEEMSREMS. A compositionally biased stretch (polar residues) spans 579-590; the sequence is YGPSSRNTQTST.

In terms of tissue distribution, expressed at low levels in roots, hypocotyls, stems, flowers, siliques, cotyledons, and leaves. Particularly present in hydathodes of cotyledons and root hairs.

It is found in the cytoplasm. The protein resides in the cytoskeleton. Functionally, plant-specific microtubule-associated protein (MAP) that regulates the orientation of cortical microtubules and the direction of organ growth. The chain is TORTIFOLIA1-like protein 1 from Arabidopsis thaliana (Mouse-ear cress).